The sequence spans 984 residues: MSSTTVAEFANELKKTPETLLDQLKSAGVPKAAPTDALTEADKQRLLGFLKASHGTAEPERKKITLTKKSTSEIKQADATGRARTIQVEVRKKRTFIQRDDGHPATPEVQPVAEAPAAAPAAPRIDEAELARREEEARRQAELIRRQEEELAEKRRLREEAEAREREQAEKAERAEQAEQEAARIAAEKKAADAAAAAPAKEAAKPAAAPVAAAAAAAEQQAADTKLAAQTAATQAKEDAKAKAAAESKARADEEAARAKDLDERRRKALAEAEAIRAMMNAPARVLVPHKAPEKPQPEKAAVKGTLHKPAAPAARPGAPAAPGAAAAPGAAGAGKEVKSAKLSSSWAGDPAKKKEIKTRGDASGGVGRGNWRGGPRGRRGSNDRGGHEEHVQAAPVEARILEVHVPETITVAELAHKMAVKAQEVIKQLMKLGQMATINQSLDQDTAMILVEEMGHNAVVAALDDPEAFTDEDVSAQTAEALPRAPVVTVMGHVDHGKTSLLDYIRRAKVAAGEAGGITQHIGAYHVQTERGMVSFLDTPGHEAFTAMRARGAQATDIVILVVAADDGVMPQTKEAIKHAKAAGVPIVVAINKIDKPDASPDRVKQELVAEEVVPEEYGGDVPFVPVSAKTGQGIDDLLEQVLLQAEVLELKAPVDAAAKGLVIEAQLDKGRGPVATVLVQSGTLKTGDVVLAGSTYGRVRAMLDEDGRTIKSAGPSIPVEIQGLTEVPQAGDEFMVMSDERRAREIATYRAGKFRNTKLAKAQAANLQNMFTDLSAGEVQTLRIIIKADVQGSQEALAQSLLKLATDEVKVQIVYAGVGGISESDINLAIASKAIVIGFNVRADAGARKLAEGNGVQLNYYSIIYDAVDEIKVAMSGMLAPERREEIIGSAEIRTVFVASKIGTVAGSYITSGSVNRSAHFRLLRDNVVIYTGEVDSIKRMKDDVREVREGFECGIKLKNYNDIKEGDQLEFFEIKEIARTL.

Disordered stretches follow at residues 92–267 and 280–392; these read KKRT…ERRR and MNAP…EEHV. A compositionally biased stretch (low complexity) spans 104 to 123; the sequence is PATPEVQPVAEAPAAAPAAP. The segment covering 124–177 has biased composition (basic and acidic residues); it reads RIDEAELARREEEARRQAELIRRQEEELAEKRRLREEAEAREREQAEKAERAEQ. Positions 193-235 are enriched in low complexity; that stretch reads DAAAAAPAKEAAKPAAAPVAAAAAAAEQQAADTKLAAQTAATQ. Composition is skewed to basic and acidic residues over residues 236–267 and 291–302; these read AKED…ERRR and KAPEKPQPEKAA. The span at 310–335 shows a compositional bias: low complexity; it reads PAAPAARPGAPAAPGAAAAPGAAGAG. Basic and acidic residues predominate over residues 351–361; the sequence is PAKKKEIKTRG. Positions 363-375 are enriched in gly residues; sequence ASGGVGRGNWRGG. Residues 381–392 show a composition bias toward basic and acidic residues; the sequence is GSNDRGGHEEHV. A tr-type G domain is found at 484-653; it reads PRAPVVTVMG…LLQAEVLELK (170 aa). Residues 493-500 are G1; it reads GHVDHGKT. 493–500 serves as a coordination point for GTP; sequence GHVDHGKT. Residues 518 to 522 form a G2 region; sequence GITQH. The tract at residues 539 to 542 is G3; it reads DTPG. Residues 539–543 and 593–596 each bind GTP; these read DTPGH and NKID. Positions 593–596 are G4; that stretch reads NKID. Positions 629–631 are G5; it reads SAK.

This sequence belongs to the TRAFAC class translation factor GTPase superfamily. Classic translation factor GTPase family. IF-2 subfamily.

The protein localises to the cytoplasm. Functionally, one of the essential components for the initiation of protein synthesis. Protects formylmethionyl-tRNA from spontaneous hydrolysis and promotes its binding to the 30S ribosomal subunits. Also involved in the hydrolysis of GTP during the formation of the 70S ribosomal complex. This is Translation initiation factor IF-2 from Variovorax paradoxus (strain S110).